A 553-amino-acid polypeptide reads, in one-letter code: MKFLQIIKHLKLQNKKNALDNFVNCRTYEHISNINKLFLNNFSSTKEHSEHGQVKHENFLNSTLKYEENSQNGSTNNLKNGKYNMYVSEGNVNINEEKYKDNNISSNNTQYNNNSSNSGSLNDEGPLWKEHIDDVVNENKKKKMNRFYLDSQATTMIDPRVLDKMLPYMTYIYGNAHSRNHFFGWESEKAVEDARTNLLNLINGKNNKEIIFTSGATESNNLALIGICTYYNKLNKQKNHIITSQIEHKCILQTCRFLQTKGFEVTYLKPDTNGLVKLDDIKNSIKDNTIMASFIFVNNEIGVIQDIENIGNLCKEKNILFHTDASQAAGKVPIDVQKMNIDLMSMSGHKLYGPKGIGALYIKRKKPNIRLNALIHGGGQERGLRSGTLPTHLIVGFGEAAKVCSLEMNRDEKKVRYFFNYVKDYLTKHLDYIVFNGCQINRYYGNMNISFLFVEGESLLMSLNEIALSSGSACTSSTLEPSYVLRSIGISEDIAHTSIRIGFNRFTTFFEVQQLCINLVKSVERLRSISPLYEMELEKKNPSNDDIPKFIWT.

A compositionally biased stretch (low complexity) spans 102-122 (NNISSNNTQYNNNSSNSGSLN). Residues 102 to 125 (NNISSNNTQYNNNSSNSGSLNDEG) are disordered.

Belongs to the class-V pyridoxal-phosphate-dependent aminotransferase family. NifS/IscS subfamily. As to quaternary structure, homotetramer. Interacts with Isd11; the interaction enhances cysteine desulfurase activity of IscS. Interacts with IscU. Component of a complex, at least composed of IscS, Isd11 and IscU. It depends on pyridoxal 5'-phosphate as a cofactor.

It is found in the mitochondrion. It catalyses the reaction (sulfur carrier)-H + L-cysteine = (sulfur carrier)-SH + L-alanine. The protein operates within cofactor biosynthesis; iron-sulfur cluster biosynthesis. Its function is as follows. Catalyzes sulfur activation and mobilization in iron-sulfur cluster formation (ISC) pathway for iron-sulfur (Fe-S) cluster biogenesis. Active when in complex with a partner protein Isd11. This is Cysteine desulfurase IscS from Plasmodium falciparum (isolate 3D7).